Consider the following 365-residue polypeptide: Aminomethyltransferase (365 aa).

Belongs to the GcvT family. In terms of assembly, the glycine cleavage system is composed of four proteins: P, T, L and H.

The catalysed reaction is N(6)-[(R)-S(8)-aminomethyldihydrolipoyl]-L-lysyl-[protein] + (6S)-5,6,7,8-tetrahydrofolate = N(6)-[(R)-dihydrolipoyl]-L-lysyl-[protein] + (6R)-5,10-methylene-5,6,7,8-tetrahydrofolate + NH4(+). The glycine cleavage system catalyzes the degradation of glycine. In Chlorobium phaeobacteroides (strain DSM 266 / SMG 266 / 2430), this protein is Aminomethyltransferase.